The primary structure comprises 378 residues: Acyl-coenzyme A diphosphatase NUDT19 (378 aa).

Positions 7-258 constitute a Nudix hydrolase domain; it reads HWREAASVLL…EIWLAPPQFY (252 aa). Positions 105–126 match the Nudix box motif; the sequence is SPLPGEVAFRICAIRETFEEAG. Mg(2+) contacts are provided by Glu-120 and Glu-124. The Microbody targeting signal signature appears at 376–378; the sequence is SRL.

It belongs to the Nudix hydrolase family. Monomer. It depends on Mg(2+) as a cofactor. Mn(2+) is required as a cofactor.

The protein resides in the peroxisome. The enzyme catalyses an acyl-CoA + H2O = an acyl-4'-phosphopantetheine + adenosine 3',5'-bisphosphate + 2 H(+). It carries out the reaction CoA + H2O = (R)-4'-phosphopantetheine + adenosine 3',5'-bisphosphate + 2 H(+). The catalysed reaction is hexanoyl-CoA + H2O = hexanoyl-4'-phosphopantetheine + adenosine 3',5'-bisphosphate + 2 H(+). It catalyses the reaction octanoyl-CoA + H2O = S-octanoyl-4'-phosphopantetheine + adenosine 3',5'-bisphosphate + 2 H(+). The enzyme catalyses butanoyl-CoA + H2O = S-butanoyl-4'-phosphopantetheine + adenosine 3',5'-bisphosphate + 2 H(+). It carries out the reaction propanoyl-CoA + H2O = propanoyl-4'-phosphopantetheine + adenosine 3',5'-bisphosphate + 2 H(+). The catalysed reaction is malonyl-CoA + H2O = malonyl-4'-phosphopantetheine + adenosine 3',5'-bisphosphate + 2 H(+). It catalyses the reaction succinyl-CoA + H2O = succinyl-4'-phosphopantetheine + adenosine 3',5'-bisphosphate + 2 H(+). The enzyme catalyses choloyl-CoA + H2O = S-choloyl-4'-phosphopantetheine + adenosine 3',5'-bisphosphate + 2 H(+). It carries out the reaction 4,8-dimethylnonanoyl-CoA + H2O = S-(4,8-dimethylnonanoyl)-4'-phosphopantetheine + adenosine 3',5'-bisphosphate + 2 H(+). The catalysed reaction is (9Z,12Z,15Z)-octadecatrienoyl-CoA + H2O = S-(9Z,12Z,15Z-octadecatrienoyl)-4'-phosphopantetheine + adenosine 3',5'-bisphosphate + 2 H(+). It catalyses the reaction (9Z,12Z)-octadecadienoyl-CoA + H2O = S-(9Z,12Z-octadecadienoyl)-4'-phosphopantetheine + adenosine 3',5'-bisphosphate + 2 H(+). The enzyme catalyses (9Z)-hexadecenoyl-CoA + H2O = S-(9Z-hexadecenoyl)-4'-phosphopantetheine + adenosine 3',5'-bisphosphate + 2 H(+). It carries out the reaction (9Z)-tetradecenoyl-CoA + H2O = S-(9Z-tetradecenoyl)-4'-phosphopantetheine + adenosine 3',5'-bisphosphate + 2 H(+). The catalysed reaction is (6Z)-octenoyl-CoA + H2O = S-(6Z-octenoyl)-4'-phosphopantetheine + adenosine 3',5'-bisphosphate + 2 H(+). It catalyses the reaction hexadecanoyl-CoA + H2O = S-hexadecanoyl-4'-phosphopantetheine + adenosine 3',5'-bisphosphate + 2 H(+). The enzyme catalyses tetradecanoyl-CoA + H2O = tetradecanoyl-4'-phosphopantetheine + adenosine 3',5'-bisphosphate + 2 H(+). It carries out the reaction dodecanoyl-CoA + H2O = S-dodecanoyl-4'-phosphopantetheine + adenosine 3',5'-bisphosphate + 2 H(+). The catalysed reaction is a 5'-end CoA-ribonucleoside in mRNA + H2O = a 5'-end phospho-adenosine-phospho-ribonucleoside in mRNA + (R)-4'-phosphopantetheine + 2 H(+). Its function is as follows. Fatty acyl-coenzyme A (CoA) diphosphatase that hydrolyzes fatty acyl-CoA to yield acyl-4'-phosphopantetheine and adenosine 3',5'-bisphosphate. Mediates the hydrolysis of a wide range of CoA esters, including choloyl-CoA and branched-chain fatty-acyl-CoA esters and at low substrate concentrations medium and long-chain fatty-acyl-CoA esters are the primary substrates. Highest activity seen with medium-chain acyl-CoA esters and higher rates of activity seen with the unsaturated acyl-CoA esters compared with the saturated esters. Exhibits decapping activity towards dpCoA-capped RNAs in vitro. In Gallus gallus (Chicken), this protein is Acyl-coenzyme A diphosphatase NUDT19 (NUDT19).